Consider the following 391-residue polypeptide: Succinate--CoA ligase [ADP-forming] subunit beta (391 aa).

The ATP-grasp domain maps to 9 to 248 (KDILRKFGVA…ISEEDPFEVE (240 aa)). ATP-binding positions include lysine 50, 57-59 (GRG), glutamate 103, methionine 106, and glutamate 111. Residues asparagine 203 and aspartate 217 each contribute to the Mg(2+) site. Residues asparagine 268 and 325–327 (GIV) contribute to the substrate site.

This sequence belongs to the succinate/malate CoA ligase beta subunit family. As to quaternary structure, heterotetramer of two alpha and two beta subunits. Mg(2+) is required as a cofactor.

It catalyses the reaction succinate + ATP + CoA = succinyl-CoA + ADP + phosphate. It carries out the reaction GTP + succinate + CoA = succinyl-CoA + GDP + phosphate. Its pathway is carbohydrate metabolism; tricarboxylic acid cycle; succinate from succinyl-CoA (ligase route): step 1/1. Functionally, succinyl-CoA synthetase functions in the citric acid cycle (TCA), coupling the hydrolysis of succinyl-CoA to the synthesis of either ATP or GTP and thus represents the only step of substrate-level phosphorylation in the TCA. The beta subunit provides nucleotide specificity of the enzyme and binds the substrate succinate, while the binding sites for coenzyme A and phosphate are found in the alpha subunit. The sequence is that of Succinate--CoA ligase [ADP-forming] subunit beta from Chlorobium luteolum (strain DSM 273 / BCRC 81028 / 2530) (Pelodictyon luteolum).